The following is a 424-amino-acid chain: Na(+), Li(+), K(+)/H(+) antiporter (424 aa).

Helical transmembrane passes span 15–35 (VGEF…AIYF), 42–62 (GLAG…NLFG), 74–94 (MLVS…LANS), 105–125 (VAFT…QAMI), 141–161 (FYTT…VLFF), 165–185 (FELL…LRFY), 227–247 (LLFV…DLVI), 274–294 (TSFG…TVVI), 305–325 (WVFF…PMTS), 327–347 (FWIF…VVGL), 367–389 (AASL…TAWF), and 393–415 (WTFI…MFHL).

It belongs to the major facilitator superfamily.

The protein localises to the cell membrane. Norfloxacin transport is inhibited by CCCP. Its function is as follows. Exhibits dual functions as a Na(+)(Li(+)/K(+))/H(+) antiporter and a multidrug efflux pump. Catalyzes the efflux of Na(+), Li(+) and K(+) in exchange for external protons. Shows a preference for Na(+), followed by K(+) and Li(+). Can also function as a multidrug efflux pump. Transports ethidium bromide and norfloxacin. The protein is Na(+), Li(+), K(+)/H(+) antiporter of Planococcus maritimus.